Consider the following 584-residue polypeptide: Asparagine synthetase [glutamine-hydrolyzing] 1 (584 aa).

Residue cysteine 2 is the For GATase activity of the active site. The 184-residue stretch at cysteine 2–glycine 185 folds into the Glutamine amidotransferase type-2 domain. L-glutamine-binding positions include arginine 50–isoleucine 54, asparagine 75–glutamate 77, and aspartate 98. The 324-residue stretch at proline 193–proline 516 folds into the Asparagine synthetase domain. ATP-binding positions include leucine 231, valine 267, and serine 341–glycine 342.

It catalyses the reaction L-aspartate + L-glutamine + ATP + H2O = L-asparagine + L-glutamate + AMP + diphosphate + H(+). It participates in amino-acid biosynthesis; L-asparagine biosynthesis; L-asparagine from L-aspartate (L-Gln route): step 1/1. Essential for nitrogen assimilation, distribution and remobilization within the plant via the phloem. The protein is Asparagine synthetase [glutamine-hydrolyzing] 1 (ASN1) of Arabidopsis thaliana (Mouse-ear cress).